The following is a 168-amino-acid chain: Envelope glycoprotein L (168 aa).

Positions 1–22 (MMWKWVTLLLFVLVCGDNPVNA) are cleaved as a signal peptide. The interaction with gH stretch occupies residues 25–138 (HNPFVCCHQK…TDSSGFKNNL (114 aa)).

It belongs to the herpesviridae glycoprotein L family. In terms of assembly, interacts with glycoprotein H (gH); this interaction is necessary for the correct processing and cell surface expression of gH. The heterodimer gH/gL seems to interact with gB trimers during fusion.

The protein localises to the virion membrane. The protein resides in the host cell membrane. It localises to the host Golgi apparatus. It is found in the host trans-Golgi network. Its function is as follows. The heterodimer glycoprotein H-glycoprotein L is required for the fusion of viral and plasma membranes leading to virus entry into the host cell. Acts as a functional inhibitor of gH and maintains gH in an inhibited form. Upon binding to host integrins, gL dissociates from gH leading to activation of the viral fusion glycoproteins gB and gH. This is Envelope glycoprotein L from Connochaetes taurinus (Blue wildebeest).